Consider the following 553-residue polypeptide: Arginine--tRNA ligase (553 aa).

The 'HIGH' region motif lies at 130 to 140; it reads ANPTGDLHIGH.

This sequence belongs to the class-I aminoacyl-tRNA synthetase family. Monomer.

It is found in the cytoplasm. The catalysed reaction is tRNA(Arg) + L-arginine + ATP = L-arginyl-tRNA(Arg) + AMP + diphosphate. The chain is Arginine--tRNA ligase from Staphylococcus epidermidis (strain ATCC 12228 / FDA PCI 1200).